A 419-amino-acid polypeptide reads, in one-letter code: L-rhamnose isomerase (419 aa).

Mn(2+) is bound by residues His-262, Asp-294, and Asp-296.

Belongs to the rhamnose isomerase family. As to quaternary structure, homotetramer. Mn(2+) is required as a cofactor.

Its subcellular location is the cytoplasm. The enzyme catalyses L-rhamnopyranose = L-rhamnulose. Its pathway is carbohydrate degradation; L-rhamnose degradation; glycerone phosphate from L-rhamnose: step 1/3. In terms of biological role, catalyzes the interconversion of L-rhamnose and L-rhamnulose. The protein is L-rhamnose isomerase of Escherichia coli (strain SMS-3-5 / SECEC).